The chain runs to 139 residues: Translation initiation factor 2 subunit beta (139 aa).

Belongs to the eIF-2-beta/eIF-5 family. In terms of assembly, heterotrimer composed of an alpha, a beta and a gamma chain.

Its function is as follows. eIF-2 functions in the early steps of protein synthesis by forming a ternary complex with GTP and initiator tRNA. This chain is Translation initiation factor 2 subunit beta, found in Saccharolobus islandicus (strain Y.N.15.51 / Yellowstone #2) (Sulfolobus islandicus).